The primary structure comprises 213 residues: Adenylate kinase (213 aa).

10-15 (GAGKGT) provides a ligand contact to ATP. Positions 30–59 (STGDMFRAAMANQTEMGVLAKSYIDKGDLV) are NMP. Residues Thr-31, Arg-36, 57–59 (DLV), 86–89 (GYPR), and Gln-93 contribute to the AMP site. Positions 127–160 (GRIINKKTGETFHKIFNPPVGDYKEEDFYQREDD) are LID. Residues Arg-128 and 137 to 138 (TF) contribute to the ATP site. AMP is bound by residues Arg-157 and Arg-168. Lys-196 contributes to the ATP binding site.

Belongs to the adenylate kinase family. As to quaternary structure, monomer.

The protein resides in the cytoplasm. The catalysed reaction is AMP + ATP = 2 ADP. It participates in purine metabolism; AMP biosynthesis via salvage pathway; AMP from ADP: step 1/1. Functionally, catalyzes the reversible transfer of the terminal phosphate group between ATP and AMP. Plays an important role in cellular energy homeostasis and in adenine nucleotide metabolism. The sequence is that of Adenylate kinase from Streptococcus equi subsp. equi (strain 4047).